A 1371-amino-acid chain; its full sequence is MDPLNRSQLGPGCKTQAVVQKGPLDLIETGQGLKVQTDKPHLVSLGSGRLSTAITLLPLEEGRTVIGSAARDISLQGPGLAPEHCYIENLRGTLTLYPCGNACTIDGLPVRQPTRLTQGCMLCLGQSTFLRFNHPAEAKWMKSMIPAGVRAPGPTYNPGSAESESLVNGNHTAQPATRAPSACASHSSLVSSIEKDLQEIMDSLVLEEPGAAGKKPAATSPLSPMANGGRYLLSPPTSPGAMSVGSSYENTSPAFSPLSSPASSGSCASHSPSGQEPGPSVPPLVPARSSSYHLALQPPQSRPSGSRSSDSPRLGRKGGHERPPSPGLRGLLTDSPAATVLAEARRTTESPRLGGQLPVVAISLSEYPSSGARSQPASIPGSPKFQSPVPAPRNKIGTLQDRPPSPFREPPGTERVLTSSPSRQLVGRTFSDGLAATRTLQPPESPRLGRRGLDSMRELPPLSPSLSRRALSPLPARTAPDPKLSREVAESPRPRRWAAHGTSPEDFSLTLGARGRRTRSPSPTLGESLAPRKGSFSGRLSPAYSLGSLTGASPRQSPRAQRKLSSGDLRVPIPRERKNSITEISDNEDELLEYHRRQRQERLREQEMERLERQRLETILNLCAEYSRADGGPETGELPSIGEATAALALAGRRPSRGLAGAIVVSGRCGEESGGASQRLWESMERSDEENLKEECSSTESTQQEHEDAPGAKHQGEVLAVEEERAQVLGRVEQLKIRVKELEQQLQEAAREAEMERALLQGEREAERASLQKEQRAVDQLQEKLVALETGIQKDRDKEADALETETKLFEDLEFQQLERESRVEEERELAGQGLLRSKAELLRSVSKRKERLAVLDSQAGQIRAQAVQESERLAREKNAALQLLQKEKEKLNVLERRYHSLTGGRPFPKTTSTLKEMEKLLLPAVDLEQWYQELMSGLGTGLAAASPRSSPPPLPAKASRQLQVYRSKMDSDAASPLPRTRSGPLPSSSGSSSSSSQLSVATLGRSPSPKSALLAQNGTSSLPRNLAATLQDIETKRQLALQQKGHQVIEEQRRRLAELKQKAAAEAQCQWDALHGAGPFSAGPSGFPALMHHSILHHLPAGRERGEEGEHAYDTLSLESSDSMETSISTGGNSACSPDNMSSASGLDMGKIEEMEKMLKEAHAEKSRLMESREREMELRRQALEEERRRREQVERRLQSESARRQQLVEKEVKLREKQFSQARPLTRYLPNRKEDFDLKTHIESSGHGVDTCLHVVLSSKVCRGYLIKMGGKIKSWKKRWFVFDRLKRTLSYYVDKHETKLKGVIYFQAIEEVYYDHLRSAAKSPNPALTFCVKTHDRLYYMVAPSAEAMRIWMDVIVTGAEGYTQFMN.

Ser51 is subject to Phosphoserine. In terms of domain architecture, FHA spans 64–125 (TVIGSAARDI…LTQGCMLCLG (62 aa)). Position 131 is an asymmetric dimethylarginine (Arg131). The interval 153 to 182 (GPTYNPGSAESESLVNGNHTAQPATRAPSA) is disordered. Residues 157-175 (NPGSAESESLVNGNHTAQP) are compositionally biased toward polar residues. A phosphoserine mark is found at Ser192, Ser220, and Ser223. Disordered stretches follow at residues 211–336 (AAGK…TDSP) and 368–573 (PSSG…RVPI). 2 stretches are compositionally biased toward low complexity: residues 252–273 (SPAF…HSPS) and 296–312 (LQPP…SDSP). 2 positions are modified to phosphoserine: Ser325 and Ser335. Residues 368-377 (PSSGARSQPA) are compositionally biased toward polar residues. A phosphoserine mark is found at Ser382, Ser405, Ser431, Ser445, Ser463, Ser472, Ser491, and Ser503. Residues 464 to 477 (PSLSRRALSPLPAR) are compositionally biased toward low complexity. Residues 483 to 493 (KLSREVAESPR) show a composition bias toward basic and acidic residues. At Arg514 the chain carries Omega-N-methylarginine. Phosphoserine is present on residues Ser520 and Ser522. Thr524 carries the post-translational modification Phosphothreonine. Phosphoserine is present on residues Ser535, Ser541, Ser553, Ser557, Ser565, Ser580, Ser585, and Ser683. Residues 547–559 (GSLTGASPRQSPR) are compositionally biased toward polar residues. Disordered stretches follow at residues 672 to 714 (ESGG…GAKH) and 942 to 1020 (GLAA…QNGT). 2 stretches are compositionally biased toward basic and acidic residues: residues 682–696 (ESME…KEEC) and 703–714 (QQEHEDAPGAKH). The stretch at 688-798 (DEENLKEECS…ETGIQKDRDK (111 aa)) forms a coiled coil. Phosphoserine is present on residues Ser976 and Ser1022. The segment covering 976 to 997 (SPLPRTRSGPLPSSSGSSSSSS) has biased composition (low complexity). Residues 1124-1143 (SMETSISTGGNSACSPDNMS) are disordered. Positions 1150–1216 (MGKIEEMEKM…QQLVEKEVKL (67 aa)) form a coiled coil. In terms of domain architecture, PH spans 1261–1364 (SKVCRGYLIK…WMDVIVTGAE (104 aa)).

The protein is Pleckstrin homology-like domain family B member 1 (Phldb1) of Mus musculus (Mouse).